The primary structure comprises 306 residues: ATP-dependent (S)-NAD(P)H-hydrate dehydratase (306 aa).

One can recognise a YjeF C-terminal domain in the interval 4 to 300 (LIDLFKPMIP…NQISNGFEDL (297 aa)). (6S)-NADPHX contacts are provided by residues glycine 104 and 157 to 163 (NFVEFKS). Residues 197-201 (KGKED) and 216-225 (GMPRRCGGQG) contribute to the ATP site. Aspartate 226 is a binding site for (6S)-NADPHX.

It belongs to the NnrD/CARKD family. Requires Mg(2+) as cofactor.

It carries out the reaction (6S)-NADHX + ATP = ADP + phosphate + NADH + H(+). The enzyme catalyses (6S)-NADPHX + ATP = ADP + phosphate + NADPH + H(+). In terms of biological role, catalyzes the dehydration of the S-form of NAD(P)HX at the expense of ATP, which is converted to ADP. Together with NAD(P)HX epimerase, which catalyzes the epimerization of the S- and R-forms, the enzyme allows the repair of both epimers of NAD(P)HX, a damaged form of NAD(P)H that is a result of enzymatic or heat-dependent hydration. The polypeptide is ATP-dependent (S)-NAD(P)H-hydrate dehydratase (Dictyostelium discoideum (Social amoeba)).